Consider the following 191-residue polypeptide: Thymidylate kinase (191 aa).

Gly-7 to Ser-14 is an ATP binding site.

The protein belongs to the thymidylate kinase family.

The enzyme catalyses dTMP + ATP = dTDP + ADP. Its function is as follows. Phosphorylation of dTMP to form dTDP in both de novo and salvage pathways of dTTP synthesis. This Helicobacter pylori (strain HPAG1) protein is Thymidylate kinase.